The chain runs to 57 residues: uncharacterized protein (57 aa).

The N-terminal stretch at 1 to 24 (MYDTWFVLTAVVLFVLVLIGNVHG) is a signal peptide.

Prismatic layer of shell (at protein level).

It is found in the secreted. This is an uncharacterized protein from Margaritifera margaritifera (Freshwater pearl mussel).